We begin with the raw amino-acid sequence, 861 residues long: Methyltransferase/ribosomally synthesized type III borosin cyclic peptide precursor aboMAa (861 aa).

The segment at 1–279 (MSSPAVETKV…AISTFYLPPK (279 aa)) is methyltransferase domain. Catalysis depends on residues arginine 100, tyrosine 104, and tyrosine 126. S-adenosyl-L-methionine contacts are provided by tyrosine 126, histidine 128, valine 131, alanine 158, glutamine 200, alanine 241, serine 272, and threonine 273. Positions 280 to 408 (ALSPLHEESA…GLVRSVMKTS (129 aa)) are clasp domain. A type III-specific C-terminal domain region spans residues 409–799 (PEDVAKQFVQ…PPDLEELPIP (391 aa)). Disordered stretches follow at residues 575–596 (NGAF…SSQG) and 772–801 (EAAE…IPDA). The span at 579–593 (PSGGGGGSGGGGGSS) shows a compositional bias: gly residues. Residues 772–783 (EAAEKDSAVDDE) show a composition bias toward basic and acidic residues. The segment covering 784–797 (KFADEEPPDLEELP) has biased composition (acidic residues). Residues valine 805 and valine 807 each carry the N-methylvaline modification. 9 tandem repeats follow at residues 805–809 (VDVTD), 810–814 (VDVTD), 815–819 (VDVTD), 820–824 (VDVTD), 825–829 (VDVTD), 830–834 (VDVTD), 835–839 (VDVTD), 840–844 (VDVTD), and 845–849 (VDVTD). Residues 805-854 (VDVTDVDVTDVDVTDVDVTDVDVTDVDVTDVDVTDVDVTDVDVTDVDVVD) form a 10 X 5 AA tandem repeats of VDVTD region. At threonine 808 the chain carries N-methylthreonine. 2 positions are modified to N-methylvaline: valine 810 and valine 812. Threonine 813 bears the N-methylthreonine mark. Residues valine 815 and valine 817 each carry the N-methylvaline modification. N-methylthreonine is present on threonine 818. Valine 820 and valine 822 each carry N-methylvaline. Threonine 823 bears the N-methylthreonine mark. N-methylvaline occurs at positions 825 and 827. Threonine 828 is modified (N-methylthreonine). N-methylvaline is present on residues valine 830 and valine 832. Threonine 833 is subject to N-methylthreonine. Residues 850-854 (VDVVD) form a 10; approximate repeat.

The protein in the N-terminal section; belongs to the precorrin methyltransferase family. Post-translationally, aboMA automethylates at Val-805, Val-807, Thr-808, Val-810, Val-812, Thr-813, Val-815, Val-817, Thr-818, Val-820, Val-822, Thr-823, Val-825, Val-827 and Thr-828, Val-830, Val-832 and T-833 before being processed by a prolyloligopeptidase which likely forms a peptidyl ester upon removal of the follower propeptide, which then undergoes macrocyclization with the N-terminus of the modified core peptide. Peptide backbone alpha-N-methylations change the physicochemical properties of amide bonds to provide structural constraints and other favorable characteristics including biological membrane permeability to peptides.

Its pathway is secondary metabolite biosynthesis. In terms of biological role, fusion protein of the methyltransferase aboM and a type III borosin core peptide; part of the gene cluster that mediates the biosynthesis of a type III borosin, a highly methylated cyclic peptide with potent biological activities. Type III borosins derive from the C-terminus of the fusion protein, and it is the same protein that methylates its own C-terminus using S-adenosyl methionine (SAM). The C-terminus is subsequently cleaved off and macrocyclized by a prolyloligopeptidase to give the final product. This Anomoporia bombycina (Polyporus bombycinus) protein is Methyltransferase/ribosomally synthesized type III borosin cyclic peptide precursor aboMAa.